Consider the following 34-residue polypeptide: Leader peptide SpeFL (34 aa).

The sensor domain stretch occupies residues 1–13 (MENNSRTMPHIRR). An Ornithine recognition loop motif is present at residues 10-16 (HIRRTTH). Position 13 (arginine 13) interacts with L-ornithine. Positions 14–34 (TTHIMKFAHRNSFDFHFFNAR) are effector domain.

The protein belongs to the speF operon leader peptide family. As to quaternary structure, binds ornithine in stalled 70S ribosomes, blocking the upper two-thirds of the exit tunnel. Contacts 23S rRNA and ribosomal proteins L4 and L22.

A small protein (arrest peptide) encoded upstream of inducible ornithine carboxylase gene (speF) that controls expression of downstream genes (speF and patE) by nascent chain-translational arrest and transcriptional attenuation. In the presence of ornithine a toeprint due to ribosomal arrest can be seen on the speFL transcript. Only L-ornithine (not other tested amino acids) has this effect. It is thought that in the presence of ornithine, ribosomal stalling on speFL prevents binding of Rho transcription termination factor to a downstream rut site allowing transcription of the operon. In the absence of ornithine, ribosomes terminate translation and are recycled, exposing the rut site allowing Rho to bind and prematurely terminate transcription. The presence of a pair of rare Arg codons could slow down translation to prevent polysome accumulation and to expose the rut site to Rho. This is Leader peptide SpeFL from Escherichia coli (strain K12).